The following is a 259-amino-acid chain: Acyl-[acyl-carrier-protein]--UDP-N-acetylglucosamine O-acyltransferase (259 aa).

The protein belongs to the transferase hexapeptide repeat family. LpxA subfamily. As to quaternary structure, homotrimer.

The protein localises to the cytoplasm. It carries out the reaction a (3R)-hydroxyacyl-[ACP] + UDP-N-acetyl-alpha-D-glucosamine = a UDP-3-O-[(3R)-3-hydroxyacyl]-N-acetyl-alpha-D-glucosamine + holo-[ACP]. It functions in the pathway glycolipid biosynthesis; lipid IV(A) biosynthesis; lipid IV(A) from (3R)-3-hydroxytetradecanoyl-[acyl-carrier-protein] and UDP-N-acetyl-alpha-D-glucosamine: step 1/6. Its function is as follows. Involved in the biosynthesis of lipid A, a phosphorylated glycolipid that anchors the lipopolysaccharide to the outer membrane of the cell. The polypeptide is Acyl-[acyl-carrier-protein]--UDP-N-acetylglucosamine O-acyltransferase (Nautilia profundicola (strain ATCC BAA-1463 / DSM 18972 / AmH)).